Here is a 249-residue protein sequence, read N- to C-terminus: Acetylglutamate kinase (249 aa).

Residues 36-37 (GG), Arg58, and Asn147 contribute to the substrate site.

The protein belongs to the acetylglutamate kinase family. ArgB subfamily.

The protein resides in the cytoplasm. It carries out the reaction N-acetyl-L-glutamate + ATP = N-acetyl-L-glutamyl 5-phosphate + ADP. It functions in the pathway amino-acid biosynthesis; L-arginine biosynthesis; N(2)-acetyl-L-ornithine from L-glutamate: step 2/4. Functionally, catalyzes the ATP-dependent phosphorylation of N-acetyl-L-glutamate. The sequence is that of Acetylglutamate kinase from Thermus thermophilus (strain ATCC 27634 / DSM 579 / HB8).